The chain runs to 413 residues: Serine hydroxymethyltransferase (413 aa).

(6S)-5,6,7,8-tetrahydrofolate contacts are provided by residues Leu120 and 124-126 (GHL). At Lys228 the chain carries N6-(pyridoxal phosphate)lysine.

It belongs to the SHMT family. In terms of assembly, homodimer. Requires pyridoxal 5'-phosphate as cofactor.

The protein localises to the cytoplasm. The catalysed reaction is (6R)-5,10-methylene-5,6,7,8-tetrahydrofolate + glycine + H2O = (6S)-5,6,7,8-tetrahydrofolate + L-serine. It participates in one-carbon metabolism; tetrahydrofolate interconversion. The protein operates within amino-acid biosynthesis; glycine biosynthesis; glycine from L-serine: step 1/1. In terms of biological role, catalyzes the reversible interconversion of serine and glycine with tetrahydrofolate (THF) serving as the one-carbon carrier. This reaction serves as the major source of one-carbon groups required for the biosynthesis of purines, thymidylate, methionine, and other important biomolecules. Also exhibits THF-independent aldolase activity toward beta-hydroxyamino acids, producing glycine and aldehydes, via a retro-aldol mechanism. This is Serine hydroxymethyltransferase from Agathobacter rectalis (strain ATCC 33656 / DSM 3377 / JCM 17463 / KCTC 5835 / VPI 0990) (Eubacterium rectale).